The following is a 394-amino-acid chain: Penicillopepsin-3 (394 aa).

The signal sequence occupies residues 1–20 (MVSFTQLQLAFLGLSALGAA). Positions 21–70 (VPVTGTSEKKTFSLNQVKVAGTKTKNPAEHYANALRKYGAEVPSHVLAAA) are cleaved as a propeptide — activation peptide. The Peptidase A1 domain maps to 87–392 (YLTPIDVGGT…DASGPRLGFA (306 aa)). Catalysis depends on residues Asp-103 and Asp-284. The cysteines at positions 320 and 355 are disulfide-linked.

Belongs to the peptidase A1 family. Monomer.

The protein resides in the secreted. The enzyme catalyses Hydrolysis of proteins with broad specificity similar to that of pepsin A, preferring hydrophobic residues at P1 and P1', but also cleaving 20-Gly-|-Glu-21 in the B chain of insulin. Clots milk, and activates trypsinogen.. In terms of biological role, secreted aspartic endopeptidase that allows assimilation of proteinaceous substrates. The scissile peptide bond is attacked by a nucleophilic water molecule activated by two aspartic residues in the active site. Shows a broad primary substrate specificity. Favors hydrophobic residues at the P1 and P1' positions, but can also activate trypsinogen and hydrolyze the B chain of insulin between positions 'Gly-20' and 'Glu-21'. The sequence is that of Penicillopepsin-3 from Penicillium janthinellum (Penicillium vitale).